A 288-amino-acid polypeptide reads, in one-letter code: Proteasome assembly chaperone 1 (288 aa).

The interval 1 to 33 (MATFFGEVQSVFSRAVDEEEEDEDDDEEEEEDR) is disordered. Over residues 17–33 (DEEEEDEDDDEEEEEDR) the composition is skewed to acidic residues.

The protein belongs to the PSMG1 family. In terms of assembly, forms a heterodimer with psmg2. Post-translationally, degraded by the proteasome upon completion of 20S proteasome maturation.

Its subcellular location is the cytoplasm. The protein resides in the endoplasmic reticulum. Chaperone protein which promotes assembly of the 20S proteasome as part of a heterodimer with psmg2. The sequence is that of Proteasome assembly chaperone 1 from Xenopus laevis (African clawed frog).